The primary structure comprises 510 residues: Histidine ammonia-lyase (510 aa).

A cross-link (5-imidazolinone (Ala-Gly)) is located at residues 143–145 (ASG). Ser-144 carries the post-translational modification 2,3-didehydroalanine (Ser).

It belongs to the PAL/histidase family. Contains an active site 4-methylidene-imidazol-5-one (MIO), which is formed autocatalytically by cyclization and dehydration of residues Ala-Ser-Gly.

It localises to the cytoplasm. The enzyme catalyses L-histidine = trans-urocanate + NH4(+). It participates in amino-acid degradation; L-histidine degradation into L-glutamate; N-formimidoyl-L-glutamate from L-histidine: step 1/3. The protein is Histidine ammonia-lyase of Aliivibrio fischeri (strain MJ11) (Vibrio fischeri).